The following is a 364-amino-acid chain: DNA replication and repair protein RecF (364 aa).

23–30 (GPNGIGKS) contacts ATP.

This sequence belongs to the RecF family.

The protein localises to the cytoplasm. The RecF protein is involved in DNA metabolism; it is required for DNA replication and normal SOS inducibility. RecF binds preferentially to single-stranded, linear DNA. It also seems to bind ATP. The chain is DNA replication and repair protein RecF from Synechococcus sp. (strain CC9605).